Consider the following 418-residue polypeptide: Glutamyl-tRNA reductase (418 aa).

Residues T49 to R52, S107, E112 to Q114, and Q118 contribute to the substrate site. C50 acts as the Nucleophile in catalysis. G187 to I192 contributes to the NADP(+) binding site.

Belongs to the glutamyl-tRNA reductase family. In terms of assembly, homodimer.

It carries out the reaction (S)-4-amino-5-oxopentanoate + tRNA(Glu) + NADP(+) = L-glutamyl-tRNA(Glu) + NADPH + H(+). The protein operates within porphyrin-containing compound metabolism; protoporphyrin-IX biosynthesis; 5-aminolevulinate from L-glutamyl-tRNA(Glu): step 1/2. Catalyzes the NADPH-dependent reduction of glutamyl-tRNA(Glu) to glutamate 1-semialdehyde (GSA). The chain is Glutamyl-tRNA reductase from Pseudoalteromonas translucida (strain TAC 125).